We begin with the raw amino-acid sequence, 98 residues long: NADH-ubiquinone oxidoreductase chain 4L (98 aa).

3 consecutive transmembrane segments (helical) span residues 1 to 21, 29 to 49, and 61 to 81; these read MTMV…GLLM, SLLC…VTIL, and IILL…LVMV.

This sequence belongs to the complex I subunit 4L family. As to quaternary structure, core subunit of respiratory chain NADH dehydrogenase (Complex I) which is composed of 45 different subunits.

It localises to the mitochondrion inner membrane. The enzyme catalyses a ubiquinone + NADH + 5 H(+)(in) = a ubiquinol + NAD(+) + 4 H(+)(out). Core subunit of the mitochondrial membrane respiratory chain NADH dehydrogenase (Complex I) which catalyzes electron transfer from NADH through the respiratory chain, using ubiquinone as an electron acceptor. Part of the enzyme membrane arm which is embedded in the lipid bilayer and involved in proton translocation. This is NADH-ubiquinone oxidoreductase chain 4L (MT-ND4L) from Leptonychotes weddellii (Weddell seal).